The chain runs to 350 residues: Hydroxymethylglutaryl-CoA synthase (350 aa).

The active-site Proton donor/acceptor is E83. The active-site Acyl-thioester intermediate is the C115. Residues C115 and T156 each coordinate (3S)-3-hydroxy-3-methylglutaryl-CoA. R204 is a binding site for CoA. (3S)-3-hydroxy-3-methylglutaryl-CoA contacts are provided by T206 and H239. H239 (proton donor/acceptor) is an active-site residue. K244 contacts CoA. The (3S)-3-hydroxy-3-methylglutaryl-CoA site is built by N271 and S301.

It belongs to the thiolase-like superfamily. Archaeal HMG-CoA synthase family. As to quaternary structure, interacts with acetoacetyl-CoA thiolase that catalyzes the precedent step in the pathway and with a DUF35 protein. The acetoacetyl-CoA thiolase/HMG-CoA synthase complex channels the intermediate via a fused CoA-binding site, which allows for efficient coupling of the endergonic thiolase reaction with the exergonic HMGCS reaction.

It carries out the reaction acetoacetyl-CoA + acetyl-CoA + H2O = (3S)-3-hydroxy-3-methylglutaryl-CoA + CoA + H(+). The protein operates within metabolic intermediate biosynthesis; (R)-mevalonate biosynthesis; (R)-mevalonate from acetyl-CoA: step 2/3. Functionally, catalyzes the condensation of acetyl-CoA with acetoacetyl-CoA to form 3-hydroxy-3-methylglutaryl-CoA (HMG-CoA). Functions in the mevalonate (MVA) pathway leading to isopentenyl diphosphate (IPP), a key precursor for the biosynthesis of isoprenoid compounds that are building blocks of archaeal membrane lipids. This Thermococcus sibiricus (strain DSM 12597 / MM 739) protein is Hydroxymethylglutaryl-CoA synthase.